Consider the following 401-residue polypeptide: 26S proteasome regulatory subunit 6A (401 aa).

ATP is bound at residue 189 to 196 (GPPGTGKT).

This sequence belongs to the AAA ATPase family. The 26S proteasome consists of a 20S proteasome core and two 19S regulatory subunits. The 20S proteasome core is composed of 28 subunits that are arranged in four stacked rings, resulting in a barrel-shaped structure. The two end rings are each formed by seven alpha subunits, and the two central rings are each formed by seven beta subunits. The catalytic chamber with the active sites is on the inside of the barrel.

It is found in the cytoplasm. Its subcellular location is the nucleus. In terms of biological role, acts as a regulatory subunit of the 26S proteasome which degrades poly-ubiquitinated proteins in the cytoplasm and in the nucleus. It is essential for the regulated turnover of proteins and for the removal of misfolded proteins. The proteasome is a multicatalytic proteinase complex that is characterized by its ability to cleave peptides with Arg, Phe, Tyr, Leu, and Glu adjacent to the leaving group at neutral or slightly basic pH. This is 26S proteasome regulatory subunit 6A (RPT5) from Encephalitozoon cuniculi (strain GB-M1) (Microsporidian parasite).